A 214-amino-acid chain; its full sequence is rRNA N(6)-adenosine-methyltransferase metl-5 (214 aa).

Residues glutamine 25, threonine 28, glycine 55, cysteine 58, aspartate 78, and aspartate 106–isoleucine 107 each bind S-adenosyl-L-methionine.

This sequence belongs to the methyltransferase superfamily. PrmA family. Heterodimer; heterodimerizes with TRMT112/C04H5.1.

The enzyme catalyses adenosine in rRNA + S-adenosyl-L-methionine = N(6)-methyladenosine in rRNA + S-adenosyl-L-homocysteine + H(+). Functionally, catalytic subunit of a heterodimer with TRMT112/C04H5.1, which specifically methylates the 6th position of adenine in position 1717 of 18S rRNA. This is rRNA N(6)-adenosine-methyltransferase metl-5 from Caenorhabditis elegans.